We begin with the raw amino-acid sequence, 65 residues long: Small vasohibin-binding protein (65 aa).

The segment covering 1 to 22 (MEPACRKDKQKQQTPTRGDRTK) has biased composition (basic and acidic residues). The interval 1–30 (MEPACRKDKQKQQTPTRGDRTKQKTAQQEL) is disordered. Residues 31–51 (KQRQRAEIYALNKVMTELEQQ) adopt a coiled-coil conformation.

This sequence belongs to the SVBP family.

It localises to the cytoplasm. The protein resides in the secreted. The protein localises to the cytoskeleton. Enhances the tyrosine carboxypeptidase activity of vash1 and vash2, thereby promoting the removal of the C-terminal tyrosine residue of alpha-tubulin. Also required to enhance the solubility and secretion of vash1 and vash2. May play a role in axon and excitatory synapse formation. The protein is Small vasohibin-binding protein of Danio rerio (Zebrafish).